The sequence spans 230 residues: MAESTTPEVVAYPAGDEPLPVLSEVEVRVLGALVEKQLTTPEYYPLTLNALVNACNQTSSRDPIVSYDEATVTRGLDGLRDKKLAYVFAGAESRVVKFGHKFAERFELGRAEVAVLCVLLLRGPQTPGELRSRTGRMHAFESLPDLEQTIAALAAKQPHPLVTRLPRQTGFKEVRVTHLLGGSVSVSSAEPAPEPPPVDRTMQLDQDVAALRQELAELREQFAAFRKQFE.

This sequence belongs to the UPF0502 family.

The protein is UPF0502 protein Oter_3715 of Opitutus terrae (strain DSM 11246 / JCM 15787 / PB90-1).